The chain runs to 509 residues: Transcription factor SOX-9 (509 aa).

2 disordered regions span residues 1–66 and 160–271; these read MNLL…ESEE and RLRV…IDFR. Low complexity predominate over residues 27–41; that stretch reads SEGSRGSPCPSGSGS. Positions 42–52 are enriched in polar residues; that stretch reads DTENTRPQENT. Composition is skewed to basic and acidic residues over residues 56-66 and 160-174; these read GEPDLKKESEE and RLRVQHKKDHPDYKY. The interval 63–103 is dimerization (DIM); the sequence is ESEEDKFPVCIREAVSQVLKGYDWTLVPMPVRVNGSSKNKP. Residues 63–103 form a PQA region; that stretch reads ESEEDKFPVCIREAVSQVLKGYDWTLVPMPVRVNGSSKNKP. A Phosphoserine modification is found at Ser64. The HMG box DNA-binding region spans 105–173; sequence VKRPMNAFMV…QHKKDHPDYK (69 aa). The residue at position 211 (Ser211) is a Phosphoserine. The transactivation domain (TAM) stretch occupies residues 224 to 307; the sequence is PGEHSGQSQG…LPPNGHPGVP (84 aa). Short sequence motifs (9aaTAD) lie at residues 275–284 and 290–298; these read IGELSSDVIS and DVNEFDQYL. Disordered stretches follow at residues 335–415 and 420–439; these read WMSK…QHSP and YSPFNLPHYSPSYPPITRSQ. Over residues 341-359 the composition is skewed to pro residues; it reads APPPPPHPPQQPPPVPQAP. Residues 360–369 are compositionally biased toward low complexity; sequence AQPQAALPQQ. Residues 380-415 are compositionally biased toward polar residues; sequence HTLTTLSSEPGQSQRTHIKTEQLSPSHYSEQQQHSP. Positions 394–509 are transactivation domain (TAC); it reads RTHIKTEQLS…QPVYTQLTRP (116 aa). Lys398 participates in a covalent cross-link: Glycyl lysine isopeptide (Lys-Gly) (interchain with G-Cter in ubiquitin). The 9aaTAD 3 motif lies at 460-468; it reads SVLYSTFTY. Residues 479 to 509 are disordered; the sequence is PIADTSGVPSIPQTHSPQHWEQPVYTQLTRP. Positions 485 to 509 are enriched in polar residues; the sequence is GVPSIPQTHSPQHWEQPVYTQLTRP.

Homodimer; homodimerization is required for activity. Interacts (via C-terminus) with ZNF219; forming a complex that binds to the COL2A1 promoter and activates COL2A1 expression. Interacts with DDRGK1. Interacts with EP300/p300. Interacts with beta-catenin (CTNNB1); inhibiting CTNNB1 activity by competing with the binding sites of TCF/LEF within CTNNB1. In terms of processing, acetylated; acetylation impairs nuclear localization and ability to transactivate expression of target genes. Deacetylated by SIRT1. Phosphorylation at Ser-64 and Ser-211 by PKA increases transcriptional activity and may help delay chondrocyte maturation downstream of PTHLH/PTHrP signaling. Phosphorylation at either Ser-64 or Ser-211 is required for sumoylation, but phosphorylation is not dependent on sumoylation. Phosphorylated on tyrosine residues; tyrosine dephosphorylation by PTPN11/SHP2 blocks SOX9 phosphorylation by PKA and subsequent SUMOylation. Post-translationally, sumoylated; phosphorylation at either Ser-64 or Ser-211 is required for sumoylation. Sumoylation is induced by BMP signaling pathway. In terms of processing, ubiquitinated; ubiquitination leads to proteasomal degradation and is negatively regulated by DDRGK1.

The protein localises to the nucleus. Transcription factor that plays a key role in chondrocytes differentiation and skeletal development. Specifically binds the 5'-ACAAAG-3' DNA motif present in enhancers and super-enhancers and promotes expression of genes important for chondrogenesis, including cartilage matrix protein-coding genes COL2A1, COL4A2, COL9A1, COL11A2 and ACAN, SOX5 and SOX6. Also binds to some promoter regions. Plays a central role in successive steps of chondrocyte differentiation. Absolutely required for precartilaginous condensation, the first step in chondrogenesis during which skeletal progenitors differentiate into prechondrocytes. Together with SOX5 and SOX6, required for overt chondrogenesis when condensed prechondrocytes differentiate into early stage chondrocytes, the second step in chondrogenesis. Later, required to direct hypertrophic maturation and block osteoblast differentiation of growth plate chondrocytes: maintains chondrocyte columnar proliferation, delays prehypertrophy and then prevents osteoblastic differentiation of chondrocytes by lowering beta-catenin (CTNNB1) signaling and RUNX2 expression. Also required for chondrocyte hypertrophy, both indirectly, by keeping the lineage fate of chondrocytes, and directly, by remaining present in upper hypertrophic cells and transactivating COL10A1 along with MEF2C. Low lipid levels are the main nutritional determinant for chondrogenic commitment of skeletal progenitor cells: when lipids levels are low, FOXO (FOXO1 and FOXO3) transcription factors promote expression of SOX9, which induces chondrogenic commitment and suppresses fatty acid oxidation. Mechanistically, helps, but is not required, to remove epigenetic signatures of transcriptional repression and deposit active promoter and enhancer marks at chondrocyte-specific genes. Acts in cooperation with the Hedgehog pathway-dependent GLI (GLI1 and GLI3) transcription factors. In addition to cartilage development, also acts as a regulator of proliferation and differentiation in epithelial stem/progenitor cells: involved in the lung epithelium during branching morphogenesis, by balancing proliferation and differentiation and regulating the extracellular matrix. Controls epithelial branching during kidney development. The sequence is that of Transcription factor SOX-9 (SOX9) from Sus scrofa (Pig).